A 223-amino-acid chain; its full sequence is MASKLLRAVILGPPGSGKGTVCERIAQNFGLQHLSSGHLLRENLKTNTEVGDVAKQYLEKGLLVPDHVITRLMMSELETRSAQHWLLDGFPRTLVQAEALDRICDVDLVISLNIPFETLKDRLSRRWIHPSSGRVYNLDFNPPQVLGVDDITGEPLVQQEDDKPEALAARLRRYKDAAKPVIELYKSRGVLHQFSGTETNRIWPYVYTLFSNKITPIQSKEAY.

15–20 (GSGKGT) contacts a ribonucleoside 5'-triphosphate. Positions 35–64 (SSGHLLRENLKTNTEVGDVAKQYLEKGLLV) are NMP. 2 residues coordinate AMP: S36 and R41. K60 is modified (N6-succinyllysine). Residues 62-64 (LLV), 89-92 (GFPR), and Q96 each bind AMP. Residues 125-162 (RRWIHPSSGRVYNLDFNPPQVLGVDDITGEPLVQQEDD) are LID. A ribonucleoside 5'-triphosphate contacts are provided by residues R126 and 135–136 (VY). R170 is an AMP binding site. K175 bears the N6-acetyllysine mark. N6-acetyllysine; alternate occurs at positions 179 and 186. K179 and K186 each carry N6-succinyllysine; alternate. T199 provides a ligand contact to a ribonucleoside 5'-triphosphate.

Belongs to the adenylate kinase family. AK3 subfamily. In terms of assembly, monomer. Interacts with SLC25A5/ANT2. In terms of tissue distribution, expressed in the pyramidal cells in the hippocampus.

It localises to the mitochondrion matrix. It catalyses the reaction a ribonucleoside 5'-phosphate + ATP = a ribonucleoside 5'-diphosphate + ADP. It carries out the reaction AMP + ATP = 2 ADP. The enzyme catalyses GTP + AMP = GDP + ADP. The catalysed reaction is CMP + ATP = CDP + ADP. It catalyses the reaction GTP + CMP = CDP + GDP. It carries out the reaction dAMP + ATP = dADP + ADP. The enzyme catalyses dCMP + ATP = dCDP + ADP. The catalysed reaction is a 2'-deoxyribonucleoside 5'-diphosphate + ATP = a 2'-deoxyribonucleoside 5'-triphosphate + ADP. It catalyses the reaction a ribonucleoside 5'-diphosphate + ATP = a ribonucleoside 5'-triphosphate + ADP. It carries out the reaction GDP + ATP = GTP + ADP. The enzyme catalyses CDP + GTP = CTP + GDP. The catalysed reaction is CDP + ATP = CTP + ADP. It catalyses the reaction UDP + ATP = UTP + ADP. It carries out the reaction GTP + UDP = UTP + GDP. The enzyme catalyses dADP + GTP = dATP + GDP. The catalysed reaction is dCDP + GTP = dCTP + GDP. It catalyses the reaction dCDP + ATP = dCTP + ADP. It carries out the reaction dGDP + ATP = dGTP + ADP. The enzyme catalyses dTDP + GTP = dTTP + GDP. The catalysed reaction is dTDP + ATP = dTTP + ADP. In terms of biological role, broad-specificity mitochondrial nucleoside phosphate kinase involved in cellular nucleotide homeostasis by catalyzing nucleoside-phosphate interconversions. Similar to other adenylate kinases, preferentially catalyzes the phosphorylation of the nucleoside monophosphate AMP with ATP as phosphate donor to produce ADP. Phosphorylates only AMP when using GTP as phosphate donor. In vitro, can also catalyze the phosphorylation of CMP, dAMP and dCMP and use GTP as an alternate phosphate donor. Moreover, exhibits a diphosphate kinase activity, producing ATP, CTP, GTP, UTP, TTP, dATP, dCTP and dGTP from the corresponding diphosphate substrates with either ATP or GTP as phosphate donors. Plays a role in controlling cellular ATP levels by regulating phosphorylation and activation of the energy sensor protein kinase AMPK. Plays a protective role in the cellular response to oxidative stress. This Rattus norvegicus (Rat) protein is Adenylate kinase 4, mitochondrial.